The following is a 400-amino-acid chain: Enoyl-[acyl-carrier-protein] reductase [NADH] (400 aa).

Residues 48-53 (GASTGY), 74-75 (FE), 111-112 (DA), and 139-140 (LA) contribute to the NAD(+) site. Tyrosine 225 provides a ligand contact to substrate. Catalysis depends on tyrosine 235, which acts as the Proton donor. NAD(+) contacts are provided by residues lysine 244 and 273–275 (VVT).

The protein belongs to the TER reductase family. Monomer.

It carries out the reaction a 2,3-saturated acyl-[ACP] + NAD(+) = a (2E)-enoyl-[ACP] + NADH + H(+). It functions in the pathway lipid metabolism; fatty acid biosynthesis. In terms of biological role, involved in the final reduction of the elongation cycle of fatty acid synthesis (FAS II). Catalyzes the reduction of a carbon-carbon double bond in an enoyl moiety that is covalently linked to an acyl carrier protein (ACP). This chain is Enoyl-[acyl-carrier-protein] reductase [NADH], found in Burkholderia ambifaria (strain MC40-6).